A 65-amino-acid polypeptide reads, in one-letter code: Large ribosomal subunit protein bL35 (65 aa).

The tract at residues 1–26 (MPKMKTNRASAKRFKKTASGGFKAGQ) is disordered.

It belongs to the bacterial ribosomal protein bL35 family.

The protein is Large ribosomal subunit protein bL35 of Oenococcus oeni (strain ATCC BAA-331 / PSU-1).